The sequence spans 349 residues: Biotin synthase (349 aa).

Positions 70-295 (PEVEVEGIIS…RTMLRFAGGR (226 aa)) constitute a Radical SAM core domain. Cys85, Cys89, and Cys92 together coordinate [4Fe-4S] cluster. [2Fe-2S] cluster-binding residues include Cys128, Cys161, Cys220, and Arg290.

It belongs to the radical SAM superfamily. Biotin synthase family. In terms of assembly, homodimer. Requires [4Fe-4S] cluster as cofactor. [2Fe-2S] cluster serves as cofactor.

It carries out the reaction (4R,5S)-dethiobiotin + (sulfur carrier)-SH + 2 reduced [2Fe-2S]-[ferredoxin] + 2 S-adenosyl-L-methionine = (sulfur carrier)-H + biotin + 2 5'-deoxyadenosine + 2 L-methionine + 2 oxidized [2Fe-2S]-[ferredoxin]. The protein operates within cofactor biosynthesis; biotin biosynthesis; biotin from 7,8-diaminononanoate: step 2/2. Functionally, catalyzes the conversion of dethiobiotin (DTB) to biotin by the insertion of a sulfur atom into dethiobiotin via a radical-based mechanism. The protein is Biotin synthase of Mycobacterium bovis (strain ATCC BAA-935 / AF2122/97).